Here is a 414-residue protein sequence, read N- to C-terminus: Schlafen-like protein 1 (414 aa).

A disordered region spans residues leucine 141 to arginine 203. Over residues serine 154–asparagine 185 the composition is skewed to pro residues. Glycine 268 to valine 275 contacts ATP. Residues arginine 373–leucine 407 are a coiled coil.

Belongs to the Schlafen family. Subgroup I subfamily.

This is Schlafen-like protein 1 (Slfnl1) from Rattus norvegicus (Rat).